A 555-amino-acid chain; its full sequence is Efflux pump FUS6 (555 aa).

A disordered region spans residues 1–23 (MASAKDAQPAPEKSLSSDPQPEP). The next 5 membrane-spanning stretches (helical) occupy residues 31 to 51 (WLIF…TSII), 67 to 87 (LYVW…PIFA), 97 to 117 (SLTL…GGAH), 130 to 150 (GIGG…MVSI), and 159 to 179 (IIGG…GAFA). Asn181 carries N-linked (GlcNAc...) asparagine glycosylation. The next 3 helical transmembrane spans lie at 186-206 (WIFY…GLFL), 225-245 (WGGS…LSWG), and 253-273 (GWQT…FFAY). A glycan (N-linked (GlcNAc...) asparagine) is linked at Asn291. Helical transmembrane passes span 297-317 (LLVI…FLPV), 332-352 (VMLF…GITI), 360-380 (VWHF…TLLD), 393-413 (ILFG…ILAS), 425-445 (AWTF…AAVF), and 501-521 (KVVW…CFFV). N-linked (GlcNAc...) asparagine glycosylation occurs at Asn545.

Belongs to the major facilitator superfamily. TCR/Tet family.

The protein localises to the membrane. In terms of biological role, efflux pump; part of the gene cluster that mediates the biosynthesis of the mycotoxin fusarin C. Within the cluster, FUS1, FUS2, FUS8 and FUS9 are sufficient for fusarin production. The other FUS cluster members are not essential for fusarin C biosynthesis. The chain is Efflux pump FUS6 from Gibberella fujikuroi (strain CBS 195.34 / IMI 58289 / NRRL A-6831) (Bakanae and foot rot disease fungus).